The following is a 319-amino-acid chain: ATP-dependent 6-phosphofructokinase (319 aa).

Gly-11 contributes to the ATP binding site. Residue 21 to 25 coordinates ADP; that stretch reads RAVVR. ATP-binding positions include 72–73 and 102–105; these read RC and GDGS. Mg(2+) is bound at residue Asp-103. Residue 125 to 127 participates in substrate binding; the sequence is TID. Asp-127 (proton acceptor) is an active-site residue. Arg-154 contacts ADP. Residues Arg-162 and 169 to 171 each bind substrate; that span reads MGR. ADP-binding positions include 185–187, Arg-211, and 213–215; these read GAE and KKH. Substrate is bound by residues Glu-222, Arg-243, and 249-252; that span reads HVQR.

It belongs to the phosphofructokinase type A (PFKA) family. ATP-dependent PFK group I subfamily. Prokaryotic clade 'B1' sub-subfamily. Homotetramer. Mg(2+) serves as cofactor.

Its subcellular location is the cytoplasm. The enzyme catalyses beta-D-fructose 6-phosphate + ATP = beta-D-fructose 1,6-bisphosphate + ADP + H(+). Its pathway is carbohydrate degradation; glycolysis; D-glyceraldehyde 3-phosphate and glycerone phosphate from D-glucose: step 3/4. With respect to regulation, allosterically activated by ADP and other diphosphonucleosides, and allosterically inhibited by phosphoenolpyruvate. Catalyzes the phosphorylation of D-fructose 6-phosphate to fructose 1,6-bisphosphate by ATP, the first committing step of glycolysis. The chain is ATP-dependent 6-phosphofructokinase from Bacillus anthracis (strain A0248).